The primary structure comprises 191 residues: Peptidyl-tRNA hydrolase (191 aa).

TRNA is bound at residue Tyr-15. The Proton acceptor role is filled by His-20. Positions 66, 68, and 114 each coordinate tRNA.

Belongs to the PTH family. As to quaternary structure, monomer.

Its subcellular location is the cytoplasm. It carries out the reaction an N-acyl-L-alpha-aminoacyl-tRNA + H2O = an N-acyl-L-amino acid + a tRNA + H(+). Its function is as follows. Hydrolyzes ribosome-free peptidyl-tRNAs (with 1 or more amino acids incorporated), which drop off the ribosome during protein synthesis, or as a result of ribosome stalling. Functionally, catalyzes the release of premature peptidyl moieties from peptidyl-tRNA molecules trapped in stalled 50S ribosomal subunits, and thus maintains levels of free tRNAs and 50S ribosomes. The sequence is that of Peptidyl-tRNA hydrolase from Streptococcus agalactiae serotype III (strain NEM316).